A 634-amino-acid polypeptide reads, in one-letter code: Ankyrin repeat and SOCS box protein 2 (634 aa).

The UIM domain occupies 26-45 (SEEELLQMAIEQSLADKTRG). Positions 36–82 (EQSLADKTRGPTPAEASASSQTNHQPGHFHPWTRSPSSPENPPARAP) are disordered. 12 ANK repeats span residues 104-133 (AAMD…NLAE), 137-167 (EGWL…TIDQ), 171-200 (QEET…EPDI), 204-233 (SRET…DANH), 237-266 (RGWT…KVEA), 270-299 (YSIT…DINT), 303-332 (DSAS…DANK), 336-365 (DGLL…RTRV), 368-397 (SGIS…DVNA), 410-439 (RRSS…DPNR), 440-469 (DVIS…NIDA), and 476-504 (TAFP…DGEP). Ser-371 carries the phosphoserine modification. The 55-residue stretch at 580-634 (EDWAVIKEKAEPPRPLAHLCRLRVRKAIGKYRIKLLDTLPLPGRLIRYLKYENTQ) folds into the SOCS box domain.

This sequence belongs to the ankyrin SOCS box (ASB) family. Component of a probable ECS E3 ubiquitin-protein ligase complex which contains CUL5, either RBX1 or RNF7/RBX2, Elongin BC complex (ELOB and ELOC) and ASB2. Interacts with SKP2. Through its interaction with SKP2, likely to bridge the formation of dimeric E3-ubiquitin-protein ligase complexes composed of an ECS complex and an SCF(SKP2) complex. Interacts with JAK2; the interaction targets JAK2 for Notch-mediated proteasomal degradation. Interacts with TCF3/E2A; the interaction is mediated by SKP2 and targets TCF3 for Notch-mediated proteasomal degradation. As to quaternary structure, interacts with DES. Monoubiquitinated. Post-translationally, not monoubiquitinated. In terms of processing, phosphorylation at Ser-371 is required for association with FLNA and subsequent FLNA degradation. As to expression, highest expression in muscle, heart and spleen. Highly expressed in cells of the first and second heart fields in the developing embryonic heart. At 9.5 dpc, robust expression predominantly in the left and right ventricles (RV) and to a lower extent in inflow and outflow tracts. At 10.5 and 11.5 dpc, expression is restricted to the myocardium with no expression observed in the endocardium. In terms of tissue distribution, not expressed in immature dendritic cells. Highly expressed in adult skeletal muscle with very low levels in adult bone marrow. Expressed in immature dendritic cells and in primary dendritic cells derived from the spleen. Highly expressed in adult bone marrow with negligible levels in adult skeletal muscle. Expressed at higher levels in T helper type 2 (Th2) cells than in regulatory T (Treg) cells, type 1 helper T (Th1) cells and T helper 17 (Th17) cells.

It localises to the cytoplasm. The protein resides in the cytoskeleton. Its subcellular location is the stress fiber. The protein localises to the myofibril. It is found in the sarcomere. It localises to the z line. Its pathway is protein modification; protein ubiquitination. In terms of biological role, substrate-recognition component of a SCF-like ECS (Elongin-Cullin-SOCS-box protein) E3 ubiquitin-protein ligase complex which mediates the ubiquitination and subsequent proteasomal degradation of target proteins. Mediates Notch-induced ubiquitination and degradation of substrates including TCF3/E2A and JAK2. Required during embryonic heart development for complete heart looping. Required for cardiomyocyte differentiation. Specifically promotes the ubiquitination of SMAD9 and targets it for proteasomal degradation, leading to avoid excessive accumulation of SMAD9. Plays a role in the regulation of NK-cell migration by modulating protein levels of filamin A/FLNA via regulation of its ubiquitination and proteasome degradation. Involved in myogenic differentiation and targets filamin FLNB for proteasomal degradation but not filamin FLNA. Also targets DES for proteasomal degradation. Acts as a negative regulator of skeletal muscle mass. Its function is as follows. Targets filamins FLNA and FLNB for proteasomal degradation. This leads to enhanced adhesion of hematopoietic cells to fibronectin. Required for FLNA degradation in immature cardiomyocytes which is necessary for actin cytoskeleton remodeling, leading to proper organization of myofibrils and function of mature cardiomyocytes. Required for degradation of FLNA and FLNB in immature dendritic cells (DC) which enhances immature DC migration by promoting DC podosome formation and DC-mediated degradation of the extracellular matrix. Does not promote proteasomal degradation of tyrosine-protein kinases JAK1 or JAK2 in hematopoietic cells. In Mus musculus (Mouse), this protein is Ankyrin repeat and SOCS box protein 2.